The sequence spans 321 residues: Probable arabinan endo-1,5-alpha-L-arabinosidase C (321 aa).

A signal peptide spans 1 to 18 (MYLYTLILLFLASANVNA). Catalysis depends on Asp33, which acts as the Proton acceptor. The N-linked (GlcNAc...) asparagine glycan is linked to Asn192. Glu200 acts as the Proton donor in catalysis. The N-linked (GlcNAc...) asparagine glycan is linked to Asn224.

This sequence belongs to the glycosyl hydrolase 43 family.

The protein resides in the secreted. The enzyme catalyses Endohydrolysis of (1-&gt;5)-alpha-arabinofuranosidic linkages in (1-&gt;5)-arabinans.. It functions in the pathway glycan metabolism; L-arabinan degradation. In terms of biological role, endo-1,5-alpha-L-arabinanase involved in degradation of pectin. Its preferred substrate is linear 1,5-alpha-L-arabinan. The protein is Probable arabinan endo-1,5-alpha-L-arabinosidase C (abnC) of Aspergillus fumigatus (strain CBS 144.89 / FGSC A1163 / CEA10) (Neosartorya fumigata).